A 348-amino-acid chain; its full sequence is Phage-like element PBSX protein XkdT (348 aa).

It belongs to the Mu gp47/PBSX XkdT family.

The protein is Phage-like element PBSX protein XkdT (xkdT) of Bacillus subtilis (strain 168).